We begin with the raw amino-acid sequence, 45 residues long: Keratin-associated protein 22-2 (45 aa).

It belongs to the KRTAP type 20 family. In terms of assembly, interacts with hair keratins.

Functionally, in the hair cortex, hair keratin intermediate filaments are embedded in an interfilamentous matrix, consisting of hair keratin-associated proteins (KRTAP), which are essential for the formation of a rigid and resistant hair shaft through their extensive disulfide bond cross-linking with abundant cysteine residues of hair keratins. The matrix proteins include the high-sulfur and high-glycine-tyrosine keratins. The protein is Keratin-associated protein 22-2 (KRTAP22-2) of Homo sapiens (Human).